The primary structure comprises 720 residues: uncharacterized protein (720 aa).

A lipid anchor (N-myristoyl glycine; by host) is attached at G2.

This is an uncharacterized protein from Cryphonectria parasitica mycoreovirus 1 (strain 9B21) (CpMYRV-1).